The chain runs to 462 residues: PTS system mannitol-specific cryptic EIICB component (462 aa).

The Cytoplasmic portion of the chain corresponds to 1–24 (MENKSARAKVQAFGGFLTAMVIPN). Residues 13–344 (FGGFLTAMVI…LKMEKTVETE (332 aa)) enclose the PTS EIIC type-2 domain. A helical transmembrane segment spans residues 25–46 (IGAFIAWGFITALFIPTGWLPN). At 47–50 (EHFA) the chain is on the periplasmic side. Residues 51–71 (KIVGPMITYLLPVMIGSTGGH) form a helical membrane-spanning segment. Over 72-134 (LVGGKRGAVM…AGFEMVINNF (63 aa)) the chain is Cytoplasmic. Residues 135–156 (SLGIAGMLLCLLGFEVIGPAVL) form a helical membrane-spanning segment. At 157–165 (IANTFVKEC) the chain is on the periplasmic side. A helical transmembrane segment spans residues 166-186 (IEALVHAGYLPLLSVINEPAK). At 187–273 (VLFLNNAIDQ…VLMKPLTIIA (87 aa)) the chain is on the cytoplasmic side. A helical membrane pass occupies residues 274–293 (MIAGGMSGTWMFNLLDGGLV). Over 294-313 (AGPSPGSIFAYLALTPKGSF) the chain is Periplasmic. A helical transmembrane segment spans residues 314 to 335 (LATIAGVTVGTLVSFAITSLIL). At 336-462 (KMEKTVETES…FNQLTAEHKH (127 aa)) the chain is on the cytoplasmic side. The PTS EIIB type-2 domain maps to 371-461 (KRIAFVCDAG…LFNQLTAEHK (91 aa)). The active-site Phosphocysteine intermediate; for EIIB activity is Cys377. At Cys377 the chain carries Phosphocysteine; by EIIA.

The protein localises to the cell inner membrane. It carries out the reaction D-mannitol(out) + N(pros)-phospho-L-histidyl-[protein] = D-mannitol 1-phosphate(in) + L-histidyl-[protein]. In terms of biological role, the phosphoenolpyruvate-dependent sugar phosphotransferase system (sugar PTS), a major carbohydrate active transport system, catalyzes the phosphorylation of incoming sugar substrates concomitantly with their translocation across the cell membrane. The enzyme II CmtAB PTS system is involved in D-mannitol transport. This is PTS system mannitol-specific cryptic EIICB component (cmtA) from Escherichia coli O157:H7.